The primary structure comprises 1031 residues: MEEQVANAIEIAGNPTSDSTLKAQAFDYLNQLRTDPSGWQVCLSLFTKDPPQSHFIRHVSLEVVNSAAQAGLIDLRSLGFVRDRLLAYLRQVYGREGSNPDPPNIQNKIAQTITFLFSALYGNGWESFFDDLLSLTHKSPSSTTRDNPLGIIFYLRVINSIHDEIGDVLVSRSRAEQERANALKDLIRVRDMQKIASSWQEILSQWMDGDDLIVEMSLKAVGSWVSWIDIGLVVNQTMLDLLFQQLGRAQKAELREGEDKVRDAAVDVFTEIIGKKMKAEDKIDMIAFLNLDNVVGQISSSPPLYANRFTSKYDTDLAETVAKLVNTTVTDIVRALEQETVSAQCKEKANGLLQVFLPHILRYFSDEYDEVCSTVIPCVSDLLSYLRKMAKSNPSIASQHSSILLPILKAIIQKMRYDETASWGDDDDQTDEAEFQELRKRLGTLQQIVAAVDERLYMEAVSEVVATTFENMRQSGAQLDWRDLDLALHEMYLFGDSATKSGSLYNKGQPSGPSAERLVEMMLRMVESDIRSFTHPATQLQYMEICVRYSSFFHTHTHLIPGVLESFLQLAHHPMKKVKTRAWYLFQRLVKQLRAYIDNVAQTVVEALGDLLVIQAELPSESSDGDEMSSEDHEGSTDAVFNSQLYLFEAVGIICSIPTIPADKQVLYAQSVLSPVFVDMEKNLGSAKSGDARAVLQIHHDIMALGTLARGFSDWQPGTSSPATQLPAPEVSEAFSQVSEATLVALESLKASFDIRTASRFAFSRLIGVLGSRILPQLPRWIDGLLTQTSSRDEMALFLRLLDQVIFGFKGEIYNILDALLMPFLQRVFSGIADPTSGTDDEIHLAELKREYLNFLLAVLNNDLGAVIISERNQPMFDTVITTIEHFAKDAEDFTTAKMAFSVLSRMGSAWGGPDIAPAASNGPSTSQVALPGFGQFMITRFSPLCWALPATPSFNAKDAQAKQVLAEAGGLQRTIYSKMGMEYIEYLRDRELPGMGMGADLVEEYVGTLSRLDLRGFRQFFPQFIQRLSA.

Belongs to the exportin family.

The protein localises to the nucleus. It is found in the cytoplasm. Its function is as follows. tRNA nucleus export receptor which facilitates tRNA translocation across the nuclear pore complex. Involved in pre-tRNA splicing, probably by affecting the interaction of pre-tRNA with splicing endonuclease. This Emericella nidulans (strain FGSC A4 / ATCC 38163 / CBS 112.46 / NRRL 194 / M139) (Aspergillus nidulans) protein is Exportin-T (los1).